The primary structure comprises 141 residues: HTH-type transcriptional repressor NsrR (141 aa).

The HTH rrf2-type domain maps to 2 to 129; that stretch reads QLTNFTDYGL…DNYTLADLVE (128 aa). The segment at residues 28–51 is a DNA-binding region (H-T-H motif); that stretch reads ISEVTDVYGVSRNHMVKIINQLSR. [2Fe-2S] cluster contacts are provided by Cys91, Cys96, and Cys102.

[2Fe-2S] cluster serves as cofactor.

In terms of biological role, nitric oxide-sensitive repressor of genes involved in protecting the cell against nitrosative stress. May require iron for activity. The protein is HTH-type transcriptional repressor NsrR of Shigella boydii serotype 18 (strain CDC 3083-94 / BS512).